A 136-amino-acid polypeptide reads, in one-letter code: Photosystem II extrinsic protein U (136 aa).

The signal sequence occupies residues 1-28 (MKQLAQRLFSLALVLALVLGISVQSAQA).

The protein belongs to the PsbU family. In terms of assembly, PSII is composed of 1 copy each of membrane proteins PsbA, PsbB, PsbC, PsbD, PsbE, PsbF, PsbH, PsbI, PsbJ, PsbK, PsbL, PsbM, PsbT, PsbX, PsbY, PsbZ, Psb30/Ycf12, peripheral proteins PsbO, CyanoQ (PsbQ), PsbU, PsbV and a large number of cofactors. It forms dimeric complexes.

The protein resides in the cellular thylakoid membrane. One of the extrinsic, lumenal subunits of photosystem II (PSII). PSII is a light-driven water plastoquinone oxidoreductase, using light energy to abstract electrons from H(2)O, generating a proton gradient subsequently used for ATP formation. The extrinsic proteins stabilize the structure of photosystem II oxygen-evolving complex (OEC), the ion environment of oxygen evolution and protect the OEC against heat-induced inactivation. This chain is Photosystem II extrinsic protein U, found in Synechococcus elongatus (strain ATCC 33912 / PCC 7942 / FACHB-805) (Anacystis nidulans R2).